A 410-amino-acid chain; its full sequence is Maintenance of mitochondrial morphology protein 1 (410 aa).

At 1-19 (MTPDSCPVRPEPTLSFTQG) the chain is on the lumenal side. The chain crosses the membrane as a helical span at residues 20-40 (LIVGQISVVFLIAAFIKFFIF). At 41–410 (GDPPSAEETA…PMPGSLAVDD (370 aa)) the chain is on the cytoplasmic side. Residues 71–87 (LRTSNQRPGSQQQQSVL) show a composition bias toward polar residues. Residues 71 to 98 (LRTSNQRPGSQQQQSVLNRKKSSILRSG) are disordered. An SMP-LTD domain is found at 119 to 335 (QPESLDWFNV…EPRFQEIPLP (217 aa)). The disordered stretch occupies residues 380–410 (ARQAAQRDSLRYRRPRADDAFPMPGSLAVDD). Residues 387-398 (DSLRYRRPRADD) show a composition bias toward basic and acidic residues.

The protein belongs to the MMM1 family. Homodimer. Component of the ER-mitochondria encounter structure (ERMES) or MDM complex, composed of MMM1, MDM10, MDM12 and MDM34. An MMM1 homodimer associates with one molecule of MDM12 on each side in a pairwise head-to-tail manner, and the SMP-LTD domains of MMM1 and MDM12 generate a continuous hydrophobic tunnel for phospholipid trafficking.

The protein resides in the endoplasmic reticulum membrane. Component of the ERMES/MDM complex, which serves as a molecular tether to connect the endoplasmic reticulum (ER) and mitochondria. Components of this complex are involved in the control of mitochondrial shape and protein biogenesis, and function in nonvesicular lipid trafficking between the ER and mitochondria. The MDM12-MMM1 subcomplex functions in the major beta-barrel assembly pathway that is responsible for biogenesis of all outer membrane beta-barrel proteins, and acts in a late step after the SAM complex. The MDM10-MDM12-MMM1 subcomplex further acts in the TOM40-specific pathway after the action of the MDM12-MMM1 complex. Essential for establishing and maintaining the structure of mitochondria and maintenance of mtDNA nucleoids. This is Maintenance of mitochondrial morphology protein 1 from Pyricularia oryzae (strain 70-15 / ATCC MYA-4617 / FGSC 8958) (Rice blast fungus).